Here is a 274-residue protein sequence, read N- to C-terminus: MSNFSLSPSPTSGFSLNLQNPTKTSYLSFSSSINTIFAPLSSNTTKSFSGLTHKAALPRNLSLTCRHSDYFEPQQQQQQQQQQPQGASTPKVFVGYSIYKGKAALTVEPRSPEFSPLDSGAFKLSREGMVMLQFAPAAGVRQYDWSRKQVFSLSVTEIGSIISLGAKDSCEFFHDPNKGRSDEGRVRKVLKVEPLPDGSGHFFNLSVQNKLINLDENIYIPVTKAEFAVLVSAFNFVMPYLLGWHTAVNSFKPEDASRSNNANPRSGAELEWNR.

The N-terminal 54 residues, 1–54 (MSNFSLSPSPTSGFSLNLQNPTKTSYLSFSSSINTIFAPLSSNTTKSFSGLTHK), are a transit peptide targeting the chloroplast. The tract at residues 100–105 (KGKAAL) is required for ssDNA binding. The short motif at 178–191 (KGRSDEGRVRKVLK) is the Nuclear localization signal element. The segment at 253-274 (PEDASRSNNANPRSGAELEWNR) is disordered.

It belongs to the Whirly family. Homotetramer.

The protein localises to the nucleus. It localises to the plastid. The protein resides in the chloroplast. In terms of biological role, single-stranded DNA-binding protein that acts as a transcriptional activator of the pathogenesis-related gene PR-10a. Upon elicitation, binds a 30bp promoter sequence known as elicitor element response (ERE) and is required for PR-10a expression. This chain is Single-stranded DNA-binding protein WHY1, chloroplastic (WHY1), found in Solanum tuberosum (Potato).